A 228-amino-acid polypeptide reads, in one-letter code: Cutinase (228 aa).

An N-terminal signal peptide occupies residues 1 to 16 (MKFLSIISLAVSLVAA). A disulfide bond links C49 and C129. S140 (nucleophile) is an active-site residue. Cysteines 191 and 198 form a disulfide. D195 is a catalytic residue. Catalysis depends on H208, which acts as the Proton donor/acceptor.

Belongs to the cutinase family. In terms of processing, the 2 disulfide bonds play a critical role in holding the catalytic residues in juxta-position; reduction of the disulfide bridges results in the complete inactivation of the enzyme.

It is found in the secreted. It carries out the reaction cutin + H2O = cutin monomers.. Partially inhibited by berberine; higher inhibitory effects are observed with longer chain polyester substrates. Functionally, catalyzes the hydrolysis of complex carboxylic polyesters found in the cell wall of plants. Degrades cutin, a macromolecule that forms the structure of the plant cuticle. Allows pathogenic fungi to penetrate through the cuticular barrier into the host plant during the initial stage of fungal infection. This is Cutinase (CUTA) from Colletotrichum truncatum (Anthracnose fungus).